A 248-amino-acid chain; its full sequence is Ubiquinone biosynthesis O-methyltransferase (248 aa).

S-adenosyl-L-methionine contacts are provided by R41, G72, D93, and M136.

It belongs to the methyltransferase superfamily. UbiG/COQ3 family.

It catalyses the reaction a 3-demethylubiquinol + S-adenosyl-L-methionine = a ubiquinol + S-adenosyl-L-homocysteine + H(+). The enzyme catalyses a 3-(all-trans-polyprenyl)benzene-1,2-diol + S-adenosyl-L-methionine = a 2-methoxy-6-(all-trans-polyprenyl)phenol + S-adenosyl-L-homocysteine + H(+). Its pathway is cofactor biosynthesis; ubiquinone biosynthesis. Functionally, O-methyltransferase that catalyzes the 2 O-methylation steps in the ubiquinone biosynthetic pathway. This chain is Ubiquinone biosynthesis O-methyltransferase, found in Rhizobium johnstonii (strain DSM 114642 / LMG 32736 / 3841) (Rhizobium leguminosarum bv. viciae).